The chain runs to 321 residues: Phospho-N-acetylmuramoyl-pentapeptide-transferase (321 aa).

10 helical membrane-spanning segments follow: residues 1-21 (MIFI…PILI), 50-70 (MGGL…IIFV), 76-96 (IILL…DDYI), 112-132 (FLAQ…FHLV), 140-160 (IPFV…IVFW), 176-196 (GLAT…SYML), 200-220 (AIGI…PYNL), 225-245 (VFMG…ISIM), 250-270 (LSLI…MLQV), and 300-320 (VVTV…WIGV).

Belongs to the glycosyltransferase 4 family. MraY subfamily. It depends on Mg(2+) as a cofactor.

The protein resides in the cell membrane. The catalysed reaction is UDP-N-acetyl-alpha-D-muramoyl-L-alanyl-gamma-D-glutamyl-L-lysyl-D-alanyl-D-alanine + di-trans,octa-cis-undecaprenyl phosphate = Mur2Ac(oyl-L-Ala-gamma-D-Glu-L-Lys-D-Ala-D-Ala)-di-trans,octa-cis-undecaprenyl diphosphate + UMP. Its pathway is cell wall biogenesis; peptidoglycan biosynthesis. Functionally, catalyzes the initial step of the lipid cycle reactions in the biosynthesis of the cell wall peptidoglycan: transfers peptidoglycan precursor phospho-MurNAc-pentapeptide from UDP-MurNAc-pentapeptide onto the lipid carrier undecaprenyl phosphate, yielding undecaprenyl-pyrophosphoryl-MurNAc-pentapeptide, known as lipid I. This Staphylococcus epidermidis (strain ATCC 12228 / FDA PCI 1200) protein is Phospho-N-acetylmuramoyl-pentapeptide-transferase.